We begin with the raw amino-acid sequence, 62 residues long: Small ribosomal subunit protein bS21 (62 aa).

The span at 43–52 (VKKKLKSEAA) shows a compositional bias: basic and acidic residues. The interval 43–62 (VKKKLKSEAARKRKAKKKRF) is disordered. Over residues 53–62 (RKRKAKKKRF) the composition is skewed to basic residues.

It belongs to the bacterial ribosomal protein bS21 family.

The polypeptide is Small ribosomal subunit protein bS21 (Levilactobacillus brevis (strain ATCC 367 / BCRC 12310 / CIP 105137 / JCM 1170 / LMG 11437 / NCIMB 947 / NCTC 947) (Lactobacillus brevis)).